A 254-amino-acid polypeptide reads, in one-letter code: Thiazole synthase (254 aa).

The Schiff-base intermediate with DXP role is filled by Lys95. 1-deoxy-D-xylulose 5-phosphate is bound by residues Gly156, 182 to 183, and 204 to 205; these read AG and NT.

This sequence belongs to the ThiG family. Homotetramer. Forms heterodimers with either ThiH or ThiS.

The protein resides in the cytoplasm. The catalysed reaction is [ThiS sulfur-carrier protein]-C-terminal-Gly-aminoethanethioate + 2-iminoacetate + 1-deoxy-D-xylulose 5-phosphate = [ThiS sulfur-carrier protein]-C-terminal Gly-Gly + 2-[(2R,5Z)-2-carboxy-4-methylthiazol-5(2H)-ylidene]ethyl phosphate + 2 H2O + H(+). It functions in the pathway cofactor biosynthesis; thiamine diphosphate biosynthesis. Catalyzes the rearrangement of 1-deoxy-D-xylulose 5-phosphate (DXP) to produce the thiazole phosphate moiety of thiamine. Sulfur is provided by the thiocarboxylate moiety of the carrier protein ThiS. In vitro, sulfur can be provided by H(2)S. The polypeptide is Thiazole synthase (Shewanella baltica (strain OS223)).